A 1068-amino-acid polypeptide reads, in one-letter code: Receptor-like protein 13 (1068 aa).

The first 23 residues, 1 to 23, serve as a signal peptide directing secretion; it reads MEGKLFLGQYLICVILLLGQLHG. Residues 24-986 lie on the Extracellular side of the membrane; it reads YKSCIEKERK…EADESTVDME (963 aa). 2 N-linked (GlcNAc...) asparagine glycosylation sites follow: asparagine 59 and asparagine 97. LRR repeat units lie at residues 104–129, 139–162, 164–187, 188–212, 216–239, 241–264, 265–290, 292–315, 325–349, 350–373, 375–397, 398–423, 424–447, 448–471, 472–497, 499–517, 519–543, 544–567, and 569–594; these read FEDV…LFDD, LRNL…FLNA, TSLT…EFKD, LTNL…DYNS, FRKL…FLNS, TSLK…ELRD, LTNV…LFAL, KLKA…KFAK, WKNM…LTSL, TGLR…LANL, SLEY…LLAN, LSKL…SWKP, KFQL…LLHQ, KDLH…LLEN, NTKL…AHNL, FLNV…NFGW, LPHL…LDNM, KSIE…FLKG, and YNLT…NFTR. Residue asparagine 153 is glycosylated (N-linked (GlcNAc...) asparagine). N-linked (GlcNAc...) asparagine glycosylation occurs at asparagine 202. N-linked (GlcNAc...) asparagine glycosylation is present at asparagine 279. Asparagine 397 is a glycosylation site (N-linked (GlcNAc...) asparagine). Residues asparagine 471, asparagine 482, and asparagine 501 are each glycosylated (N-linked (GlcNAc...) asparagine). N-linked (GlcNAc...) asparagine glycans are attached at residues asparagine 570 and asparagine 591. One copy of the LRR 20; degenerate repeat lies at 596-615; sequence WVMSMDNNLFTGNIGKGFRS. LRR repeat units lie at residues 616–639, 641–664, 665–688, 690–710, and 711–734; these read LPSL…WIGE, QGLF…LFNI, SYLQ…VSSI, HGAV…DTLL, and LNVI…INTQ. N-linked (GlcNAc...) asparagine glycosylation is present at asparagine 663. A glycan (N-linked (GlcNAc...) asparagine) is linked at asparagine 700. Asparagine 735, asparagine 745, asparagine 771, asparagine 780, and asparagine 822 each carry an N-linked (GlcNAc...) asparagine glycan. LRR repeat units lie at residues 736-757 and 758-781; these read ISIL…FCSL and SNIQ…LSNT. 4 LRR repeats span residues 846 to 870, 871 to 893, 895 to 918, and 920 to 943; these read LKLL…LGGL, VELE…SFSG, KNVE…LTDM, and SLAV…QFNT. Asparagine 877 and asparagine 882 each carry an N-linked (GlcNAc...) asparagine glycan. Residues asparagine 925 and asparagine 930 are each glycosylated (N-linked (GlcNAc...) asparagine). Residues 987-1007 form a helical membrane-spanning segment; the sequence is SFYWSFVAAYVTILLGILASL. Topologically, residues 1008-1068 are cytoplasmic; it reads SFDSPWSRAW…PPALFHKTRT (61 aa).

This sequence belongs to the RLP family.

The protein localises to the cell membrane. The sequence is that of Receptor-like protein 13 from Arabidopsis thaliana (Mouse-ear cress).